Reading from the N-terminus, the 237-residue chain is Putative N-acetylmannosamine-6-phosphate 2-epimerase (237 aa).

The protein belongs to the NanE family.

The enzyme catalyses an N-acyl-D-glucosamine 6-phosphate = an N-acyl-D-mannosamine 6-phosphate. The protein operates within amino-sugar metabolism; N-acetylneuraminate degradation; D-fructose 6-phosphate from N-acetylneuraminate: step 3/5. Functionally, converts N-acetylmannosamine-6-phosphate (ManNAc-6-P) to N-acetylglucosamine-6-phosphate (GlcNAc-6-P). This is Putative N-acetylmannosamine-6-phosphate 2-epimerase from Caldanaerobacter subterraneus subsp. tengcongensis (strain DSM 15242 / JCM 11007 / NBRC 100824 / MB4) (Thermoanaerobacter tengcongensis).